The primary structure comprises 644 residues: ATP-dependent zinc metalloprotease FtsH (644 aa).

Residues methionine 1 to asparagine 4 are Cytoplasmic-facing. The helical transmembrane segment at leucine 5–serine 25 threads the bilayer. The Periplasmic segment spans residues glutamate 26–leucine 98. The helical transmembrane segment at leucine 99 to phenylalanine 119 threads the bilayer. The Cytoplasmic portion of the chain corresponds to methionine 120–lysine 644. Glycine 192–threonine 199 provides a ligand contact to ATP. Histidine 414 is a binding site for Zn(2+). Glutamate 415 is a catalytic residue. 2 residues coordinate Zn(2+): histidine 418 and aspartate 492. The disordered stretch occupies residues arginine 599 to lysine 644. Composition is skewed to polar residues over residues asparagine 608–proline 619 and asparagine 632–lysine 644.

The protein in the central section; belongs to the AAA ATPase family. In the C-terminal section; belongs to the peptidase M41 family. In terms of assembly, homohexamer. Requires Zn(2+) as cofactor.

It localises to the cell inner membrane. Acts as a processive, ATP-dependent zinc metallopeptidase for both cytoplasmic and membrane proteins. Plays a role in the quality control of integral membrane proteins. The protein is ATP-dependent zinc metalloprotease FtsH of Salmonella typhi.